The sequence spans 156 residues: Cyanate hydratase (156 aa).

Active-site residues include Arg-96, Glu-99, and Ser-122.

The protein belongs to the cyanase family.

The enzyme catalyses cyanate + hydrogencarbonate + 3 H(+) = NH4(+) + 2 CO2. Catalyzes the reaction of cyanate with bicarbonate to produce ammonia and carbon dioxide. The polypeptide is Cyanate hydratase (Pseudomonas putida (strain W619)).